The following is a 222-amino-acid chain: Small ribosomal subunit protein uS3 (222 aa).

The region spanning 38 to 106 (IRKFISEKLA…NVHINIVEIK (69 aa)) is the KH type-2 domain.

The protein belongs to the universal ribosomal protein uS3 family. In terms of assembly, part of the 30S ribosomal subunit. Forms a tight complex with proteins S10 and S14.

Binds the lower part of the 30S subunit head. Binds mRNA in the 70S ribosome, positioning it for translation. The sequence is that of Small ribosomal subunit protein uS3 from Lactobacillus gasseri (strain ATCC 33323 / DSM 20243 / BCRC 14619 / CIP 102991 / JCM 1131 / KCTC 3163 / NCIMB 11718 / NCTC 13722 / AM63).